Reading from the N-terminus, the 541-residue chain is Chaperonin GroEL 2 (541 aa).

Residues 29–32, 86–90, glycine 413, 476–478, and aspartate 492 each bind ATP; these read TLGP, DGTTT, and NAA.

This sequence belongs to the chaperonin (HSP60) family. Forms a cylinder of 14 subunits composed of two heptameric rings stacked back-to-back. Interacts with the co-chaperonin GroES.

It is found in the cytoplasm. It catalyses the reaction ATP + H2O + a folded polypeptide = ADP + phosphate + an unfolded polypeptide.. In terms of biological role, together with its co-chaperonin GroES, plays an essential role in assisting protein folding. The GroEL-GroES system forms a nano-cage that allows encapsulation of the non-native substrate proteins and provides a physical environment optimized to promote and accelerate protein folding. In Streptomyces avermitilis (strain ATCC 31267 / DSM 46492 / JCM 5070 / NBRC 14893 / NCIMB 12804 / NRRL 8165 / MA-4680), this protein is Chaperonin GroEL 2.